The sequence spans 776 residues: Disintegrin and metalloproteinase domain-containing protein 28 (776 aa).

The first 19 residues, 1–19, serve as a signal peptide directing secretion; sequence MLQALLTVSLLLSPVPVSA. Residues 20–193 constitute a propeptide that is removed on maturation; that stretch reads IKELPGVKKY…IARPATRLVK (174 aa). Residues 168–175 carry the Cysteine switch motif; it reads STCGTDGV. Zn(2+) is bound at residue cysteine 170. Residues 194–666 lie on the Extracellular side of the membrane; the sequence is LNDGKVQKHE…CDDSSVVFYF (473 aa). The Peptidase M12B domain maps to 204–400; the sequence is KYIEYYLVLD…KLSNCLFNAP (197 aa). N-linked (GlcNAc...) asparagine glycosylation is found at asparagine 268 and asparagine 275. 4 disulfide bridges follow: cysteine 315-cysteine 395, cysteine 355-cysteine 379, cysteine 357-cysteine 362, and cysteine 466-cysteine 486. Histidine 340 contacts Zn(2+). The active site involves glutamate 341. Zn(2+)-binding residues include histidine 344 and histidine 350. N-linked (GlcNAc...) asparagine glycosylation is present at asparagine 352. Residues 408–494 enclose the Disintegrin domain; it reads TPICGNQMVE…NCPDDRFRAN (87 aa). N-linked (GlcNAc...) asparagine glycans are attached at residues asparagine 558, asparagine 603, and asparagine 629. The region spanning 626 to 658 is the EGF-like domain; it reads KSTNCSSKCKGHAVCDHELQCQCEEGWSPPDCD. Intrachain disulfides connect cysteine 630-cysteine 640, cysteine 634-cysteine 646, and cysteine 648-cysteine 657. A helical membrane pass occupies residues 667–687; the sequence is SIVVAVLFPVAVISLVVAIVI. Over 688-776 the chain is Cytoplasmic; it reads RQQSSREKQK…SSFLDSNPKA (89 aa). Basic and acidic residues predominate over residues 691-701; it reads SSREKQKKDQR. 2 disordered regions span residues 691–728 and 746–776; these read SSRE…PQEM and PASF…NPKA. Basic residues predominate over residues 709–718; sequence RPHKQKRKPQ.

Zn(2+) is required as a cofactor. In terms of processing, pro-domain removal and maturation may be, at least in part, autocatalytic. Expressed at high levels in epididymis and at lower levels in lung.

Its subcellular location is the membrane. May play a role in the adhesive and proteolytic events that occur during lymphocyte emigration or may function in ectodomain shedding of lymphocyte surface target proteins, such as FASL and CD40L. May be involved in sperm maturation. This is Disintegrin and metalloproteinase domain-containing protein 28 (ADAM28) from Macaca fascicularis (Crab-eating macaque).